A 71-amino-acid chain; its full sequence is U-scoloptoxin(21)-Sm1a (71 aa).

The N-terminal stretch at 1-21 (MKSVIFALFLVYLLIVRAAEA) is a signal peptide. The interval 45-71 (IELANDPNGPGRRRRAPAENEDFLKHS) is disordered. Basic and acidic residues predominate over residues 60–71 (APAENEDFLKHS).

It belongs to the scoloptoxin-21 family. Expressed by the venom gland.

Its subcellular location is the secreted. The polypeptide is U-scoloptoxin(21)-Sm1a (Scolopendra morsitans (Tanzanian blue ringleg centipede)).